We begin with the raw amino-acid sequence, 249 residues long: 5'-nucleotidase SurE (249 aa).

Positions 8, 9, 39, and 91 each coordinate a divalent metal cation.

Belongs to the SurE nucleotidase family. The cofactor is a divalent metal cation.

The protein resides in the cytoplasm. The catalysed reaction is a ribonucleoside 5'-phosphate + H2O = a ribonucleoside + phosphate. In terms of biological role, nucleotidase that shows phosphatase activity on nucleoside 5'-monophosphates. The polypeptide is 5'-nucleotidase SurE (Stutzerimonas stutzeri (strain A1501) (Pseudomonas stutzeri)).